Consider the following 553-residue polypeptide: Chaperonin GroEL 1 (553 aa).

ATP-binding positions include threonine 29–proline 32, aspartate 86–threonine 90, glycine 413, asparagine 476–leucine 478, and aspartate 492. The tract at residues lysine 521 to glycine 542 is disordered. Over residues aspartate 533 to glycine 542 the composition is skewed to gly residues.

It belongs to the chaperonin (HSP60) family. In terms of assembly, forms a cylinder of 14 subunits composed of two heptameric rings stacked back-to-back. Interacts with the co-chaperonin GroES.

It localises to the cytoplasm. The enzyme catalyses ATP + H2O + a folded polypeptide = ADP + phosphate + an unfolded polypeptide.. Functionally, together with its co-chaperonin GroES, plays an essential role in assisting protein folding. The GroEL-GroES system forms a nano-cage that allows encapsulation of the non-native substrate proteins and provides a physical environment optimized to promote and accelerate protein folding. In Synechococcus sp. (strain WH7803), this protein is Chaperonin GroEL 1.